Here is a 563-residue protein sequence, read N- to C-terminus: Nigrin b (563 aa).

Positions 1–25 (MRVVAAAMLYFYIVVLAICSVGIQG) are cleaved as a signal peptide. Glu188 is an active-site residue. N-linked (GlcNAc...) asparagine glycosylation is present at Asn221. 3 disulfides stabilise this stretch: Cys274–Cys302, Cys319–Cys338, and Cys360–Cys377. 2 consecutive Ricin B-type lectin domains span residues 305–431 (RTSF…WTVT) and 434–559 (VKPI…WVTQ). A 1-alpha repeat occupies 316–356 (DGLCVDVRNGYDTDGTPLQLWPCGTQRNQRWTFDSDDTIRS). Residues 357–397 (MGKCMTANGLNNGSNIVIFNCSTAAENAIKWEVPIDGSIIN) form a 1-beta repeat. Residues Asn368 and Asn376 are each glycosylated (N-linked (GlcNAc...) asparagine). A 1-gamma repeat occupies 400–432 (SGLVMTAPRAASRTILLLEDNIYAASQGWTVTN). One copy of the 2-alpha repeat lies at 445–482 (KEMCLQSNGENNGVWMEDCEATSLQQQWALYGDRTIRV). Cys448 and Cys463 are disulfide-bonded. N-linked (GlcNAc...) asparagine glycosylation occurs at Asn483. The stretch at 486–524 (RGLCVTTNGYNSKDLIIILKCQGLPSQRWFFNSDGAIVN) is one 2-beta repeat. Residues Cys489 and Cys506 are joined by a disulfide bond. One copy of the 2-gamma repeat lies at 527–554 (SRHVMDVRASNVSLREIIIFPATGNPNQ). Residue Asn537 is glycosylated (N-linked (GlcNAc...) asparagine).

The protein in the N-terminal section; belongs to the ribosome-inactivating protein family. Type 2 RIP subfamily. Disulfide-linked dimer of A and B chains.

It carries out the reaction Endohydrolysis of the N-glycosidic bond at one specific adenosine on the 28S rRNA.. In terms of biological role, non-toxic type 2 RIP which strongly inhibits mammalian protein synthesis but does not affect plant nor bacterial protein synthesis. The A chain is responsible for inhibiting protein synthesis through the catalytic inactivation of 60S ribosomal subunits by removing adenine from position 4,324 of 28S rRNA. The B chain is a galactose-specific lectin that facilitates the binding of nigrin b to the cell membrane that precedes endocytosis. This is Nigrin b from Sambucus nigra (European elder).